Here is a 387-residue protein sequence, read N- to C-terminus: Chaperone protein DnaJ (387 aa).

The J domain maps to 5–70 (DYYEILEVSA…QKRQAYDQFG (66 aa)). The CR-type zinc finger occupies 130–208 (GTTVDVRIPT…CRGEGYKHSS (79 aa)). Residues Cys-143, Cys-146, Cys-160, Cys-163, Cys-182, Cys-185, Cys-196, and Cys-199 each contribute to the Zn(2+) site. CXXCXGXG motif repeat units follow at residues 143–150 (CESCDGSG), 160–167 (CPTCQGIG), 182–189 (CPNCHGTG), and 196–203 (CKTCRGEG).

It belongs to the DnaJ family. Homodimer. Zn(2+) is required as a cofactor.

The protein resides in the cytoplasm. Participates actively in the response to hyperosmotic and heat shock by preventing the aggregation of stress-denatured proteins and by disaggregating proteins, also in an autonomous, DnaK-independent fashion. Unfolded proteins bind initially to DnaJ; upon interaction with the DnaJ-bound protein, DnaK hydrolyzes its bound ATP, resulting in the formation of a stable complex. GrpE releases ADP from DnaK; ATP binding to DnaK triggers the release of the substrate protein, thus completing the reaction cycle. Several rounds of ATP-dependent interactions between DnaJ, DnaK and GrpE are required for fully efficient folding. Also involved, together with DnaK and GrpE, in the DNA replication of plasmids through activation of initiation proteins. This is Chaperone protein DnaJ from Hydrogenovibrio crunogenus (strain DSM 25203 / XCL-2) (Thiomicrospira crunogena).